Consider the following 116-residue polypeptide: U16-barytoxin-Tl1f (116 aa).

The signal sequence occupies residues M1–A20. A propeptide spanning residues N21–R74 is cleaved from the precursor. Intrachain disulfides connect C75–C90, C82–C95, and C89–C110. An N-linked (GlcNAc...) asparagine glycan is attached at N85.

The protein belongs to the neurotoxin 14 (magi-1) family. 06 (ICK-Trit) subfamily. Expressed by the venom gland.

Its subcellular location is the secreted. In terms of biological role, ion channel inhibitor. This Trittame loki (Brush-footed trapdoor spider) protein is U16-barytoxin-Tl1f.